Consider the following 180-residue polypeptide: DNA-directed RNA polymerase subunit Rpo7 (180 aa).

Residues 82-165 (QEVVEGEVLQ…RLPRIALTMR (84 aa)) enclose the S1 motif domain.

It belongs to the eukaryotic RPB7/RPC8 RNA polymerase subunit family. Part of the 13-subunit RNA polymerase complex. Forms a stalk with Rpo4 that extends from the main structure.

It is found in the cytoplasm. The catalysed reaction is RNA(n) + a ribonucleoside 5'-triphosphate = RNA(n+1) + diphosphate. Its function is as follows. DNA-dependent RNA polymerase (RNAP) catalyzes the transcription of DNA into RNA using the four ribonucleoside triphosphates as substrates. In Saccharolobus solfataricus (strain ATCC 35092 / DSM 1617 / JCM 11322 / P2) (Sulfolobus solfataricus), this protein is DNA-directed RNA polymerase subunit Rpo7.